The primary structure comprises 650 residues: Macrolide export ATP-binding/permease protein MacB (650 aa).

An ABC transporter domain is found at 9–248 (IELIDLERVF…RPLGRPPGGA (240 aa)). Position 45–52 (45–52 (GQSGSGKS)) interacts with ATP. Transmembrane regions (helical) follow at residues 276–296 (ALTL…MAIG), 525–545 (LTLL…IGVM), 580–600 (AVAV…GAAL), and 615–635 (PPIV…YLPA).

This sequence belongs to the ABC transporter superfamily. Macrolide exporter (TC 3.A.1.122) family. Homodimer.

It localises to the cell inner membrane. Non-canonical ABC transporter that contains transmembrane domains (TMD), which form a pore in the inner membrane, and an ATP-binding domain (NBD), which is responsible for energy generation. Confers resistance against macrolides. This chain is Macrolide export ATP-binding/permease protein MacB, found in Rhodospirillum rubrum (strain ATCC 11170 / ATH 1.1.1 / DSM 467 / LMG 4362 / NCIMB 8255 / S1).